Reading from the N-terminus, the 266-residue chain is Bidirectional sugar transporter SWEET7b (266 aa).

Residues 1 to 9 (MVSPDLIRN) are Extracellular-facing. Residues 10–30 (MVGIVGNIISFGLFLSPVPTF) form a helical membrane-spanning segment. Residues 10–97 (MVGIVGNIIS…TIFFLFSDKK (88 aa)) form the MtN3/slv 1 domain. Residues 31 to 45 (YRIIKNKDVQDFKAD) lie on the Cytoplasmic side of the membrane. The helical transmembrane segment at 46 to 66 (PYLATLLNCMLWVFYGLPIVH) threads the bilayer. Topologically, residues 67–69 (PNS) are extracellular. Residues 70-90 (ILVVTINGIGLIIEAVYLTIF) form a helical membrane-spanning segment. The Cytoplasmic portion of the chain corresponds to 91-101 (FLFSDKKNKKK). The helical transmembrane segment at 102-122 (MGVVLATEALFMAAVVLGVLL) threads the bilayer. At 123 to 131 (GAHTHQRRS) the chain is on the extracellular side. Residues 132 to 152 (LIVGILCAIFGTIMYSSPLTI) form a helical membrane-spanning segment. A MtN3/slv 2 domain is found at 133-216 (IVGILCAIFG…LILYAIYYRT (84 aa)). The Cytoplasmic segment spans residues 153 to 165 (MSQVVKTKSVEYM). Residues 166–186 (PLLLSVVSFLNGLCWTSYALI) form a helical membrane-spanning segment. Residues 187–189 (RLD) lie on the Extracellular side of the membrane. The helical transmembrane segment at 190–210 (IFITIPNGLGVLFALMQLILY) threads the bilayer. Residues 211 to 266 (AIYYRTTPKKQDKNLELPTVAPVAKDTSIVTPVSKDDDVVDGGNASHVTINITIEP) lie on the Cytoplasmic side of the membrane.

Belongs to the SWEET sugar transporter family. As to quaternary structure, forms homooligomers and/or heterooligomers.

It localises to the cell membrane. Its function is as follows. Mediates both low-affinity uptake and efflux of sugar across the plasma membrane. This is Bidirectional sugar transporter SWEET7b (SWEET7B) from Oryza sativa subsp. indica (Rice).